We begin with the raw amino-acid sequence, 226 residues long: Type-5 uracil-DNA glycosylase (226 aa).

Positions 23, 26, 125, and 140 each coordinate [4Fe-4S] cluster.

The protein belongs to the uracil-DNA glycosylase (UDG) superfamily. Type 5 (UDGb) family.

Functionally, DNA glycosylase with broad substrate specificity. Can remove uracil from double-stranded DNA containing either a U/G or U/A base pair. Can also process hydroxymethyluracil (mispaired with guanine or adenine), hypoxanthine and fluorouracil. Exhibits a clear preference for double-stranded DNA substrates, but can also process uracil in single-stranded DNA, with lower efficiency. This Pyrobaculum aerophilum (strain ATCC 51768 / DSM 7523 / JCM 9630 / CIP 104966 / NBRC 100827 / IM2) protein is Type-5 uracil-DNA glycosylase.